The sequence spans 194 residues: GTP cyclohydrolase 1 (194 aa).

Positions 83, 86, and 155 each coordinate Zn(2+).

Belongs to the GTP cyclohydrolase I family. As to quaternary structure, toroid-shaped homodecamer, composed of two pentamers of five dimers.

It catalyses the reaction GTP + H2O = 7,8-dihydroneopterin 3'-triphosphate + formate + H(+). It functions in the pathway cofactor biosynthesis; 7,8-dihydroneopterin triphosphate biosynthesis; 7,8-dihydroneopterin triphosphate from GTP: step 1/1. This is GTP cyclohydrolase 1 (folE) from Streptococcus pyogenes.